The following is a 425-amino-acid chain: UDP-N-acetylglucosamine 1-carboxyvinyltransferase (425 aa).

22-23 (KN) is a binding site for phosphoenolpyruvate. Arg93 contributes to the UDP-N-acetyl-alpha-D-glucosamine binding site. Cys117 (proton donor) is an active-site residue. At Cys117 the chain carries 2-(S-cysteinyl)pyruvic acid O-phosphothioketal. UDP-N-acetyl-alpha-D-glucosamine-binding positions include 122–126 (RPIDL), Asp307, and Val329.

It belongs to the EPSP synthase family. MurA subfamily.

It is found in the cytoplasm. The enzyme catalyses phosphoenolpyruvate + UDP-N-acetyl-alpha-D-glucosamine = UDP-N-acetyl-3-O-(1-carboxyvinyl)-alpha-D-glucosamine + phosphate. It functions in the pathway cell wall biogenesis; peptidoglycan biosynthesis. Functionally, cell wall formation. Adds enolpyruvyl to UDP-N-acetylglucosamine. This chain is UDP-N-acetylglucosamine 1-carboxyvinyltransferase, found in Prosthecochloris aestuarii (strain DSM 271 / SK 413).